The following is a 346-amino-acid chain: 36.4 kDa proline-rich protein (346 aa).

The tract at residues 11–144 (PYPPSTPKHP…PFTPKPPSPI (134 aa)) is disordered. 3 stretches are compositionally biased toward pro residues: residues 25 to 42 (KVKPPSTQPPHVKPPSTP), 51 to 81 (VKPPSTPKQPPYVKPPTTPKHPPHVKPPSTP), and 89 to 144 (QKPC…PSPI).

This is 36.4 kDa proline-rich protein (TPRP-F1) from Solanum lycopersicum (Tomato).